Consider the following 212-residue polypeptide: Thiamine-phosphate synthase (212 aa).

4-amino-2-methyl-5-(diphosphooxymethyl)pyrimidine-binding positions include 40–44 (QFREK) and N75. Positions 76 and 95 each coordinate Mg(2+). Position 113 (S113) interacts with 4-amino-2-methyl-5-(diphosphooxymethyl)pyrimidine. 139 to 141 (TSS) contacts 2-[(2R,5Z)-2-carboxy-4-methylthiazol-5(2H)-ylidene]ethyl phosphate. 4-amino-2-methyl-5-(diphosphooxymethyl)pyrimidine is bound at residue K142. Residues G171 and 191 to 192 (IS) each bind 2-[(2R,5Z)-2-carboxy-4-methylthiazol-5(2H)-ylidene]ethyl phosphate.

The protein belongs to the thiamine-phosphate synthase family. Mg(2+) serves as cofactor.

It catalyses the reaction 2-[(2R,5Z)-2-carboxy-4-methylthiazol-5(2H)-ylidene]ethyl phosphate + 4-amino-2-methyl-5-(diphosphooxymethyl)pyrimidine + 2 H(+) = thiamine phosphate + CO2 + diphosphate. The catalysed reaction is 2-(2-carboxy-4-methylthiazol-5-yl)ethyl phosphate + 4-amino-2-methyl-5-(diphosphooxymethyl)pyrimidine + 2 H(+) = thiamine phosphate + CO2 + diphosphate. It carries out the reaction 4-methyl-5-(2-phosphooxyethyl)-thiazole + 4-amino-2-methyl-5-(diphosphooxymethyl)pyrimidine + H(+) = thiamine phosphate + diphosphate. It participates in cofactor biosynthesis; thiamine diphosphate biosynthesis; thiamine phosphate from 4-amino-2-methyl-5-diphosphomethylpyrimidine and 4-methyl-5-(2-phosphoethyl)-thiazole: step 1/1. In terms of biological role, condenses 4-methyl-5-(beta-hydroxyethyl)thiazole monophosphate (THZ-P) and 2-methyl-4-amino-5-hydroxymethyl pyrimidine pyrophosphate (HMP-PP) to form thiamine monophosphate (TMP). This is Thiamine-phosphate synthase from Staphylococcus epidermidis (strain ATCC 35984 / DSM 28319 / BCRC 17069 / CCUG 31568 / BM 3577 / RP62A).